The sequence spans 199 residues: NAD(P)H dehydrogenase (quinone) (199 aa).

The region spanning 4 to 190 is the Flavodoxin-like domain; it reads VLVLYYSAYG…GGARYQGKVI (187 aa). Residues 10–15 and 78–80 each bind FMN; these read SAYGHI and TRF. Tyrosine 12 lines the NAD(+) pocket. Tryptophan 98 lines the substrate pocket. Residues 113 to 119 and histidine 134 each bind FMN; that span reads STASQHG.

Belongs to the WrbA family. It depends on FMN as a cofactor.

It catalyses the reaction a quinone + NADH + H(+) = a quinol + NAD(+). The catalysed reaction is a quinone + NADPH + H(+) = a quinol + NADP(+). This is NAD(P)H dehydrogenase (quinone) from Rhodopseudomonas palustris (strain BisB18).